A 154-amino-acid chain; its full sequence is Cytochrome c' (154 aa).

A signal peptide spans 1-23 (MKHVLASTAAGLMALGLASSAIA). Heme c is bound by residues Arg35, Gln36, Arg95, Cys144, Cys147, and His148.

Homodimer. In terms of processing, binds 1 heme c group covalently per subunit.

In terms of biological role, cytochrome c' is the most widely occurring bacterial c-type cytochrome. Cytochromes c' are high-spin proteins and the heme has no sixth ligand. Their exact function is not known. In Allochromatium vinosum (strain ATCC 17899 / DSM 180 / NBRC 103801 / NCIMB 10441 / D) (Chromatium vinosum), this protein is Cytochrome c' (cycA).